Here is an 885-residue protein sequence, read N- to C-terminus: Leucine--tRNA ligase (885 aa).

Residues 48-58 carry the 'HIGH' region motif; it reads PYPSGKLHMGH. Positions 639–643 match the 'KMSKS' region motif; that stretch reads TMSKS. ATP is bound at residue Lys642.

Belongs to the class-I aminoacyl-tRNA synthetase family.

Its subcellular location is the cytoplasm. It carries out the reaction tRNA(Leu) + L-leucine + ATP = L-leucyl-tRNA(Leu) + AMP + diphosphate. This is Leucine--tRNA ligase from Bordetella bronchiseptica (strain ATCC BAA-588 / NCTC 13252 / RB50) (Alcaligenes bronchisepticus).